A 361-amino-acid polypeptide reads, in one-letter code: Probable sugar phosphate/phosphate translocator At1g12500 (361 aa).

At Val-2 the chain carries N-acetylvaline. Helical transmembrane passes span 56 to 76, 90 to 110, 125 to 145, 153 to 173, 192 to 212, 240 to 260, 276 to 296, 306 to 326, and 329 to 349; these read TILT…VLLL, IFLT…VINI, FLKI…GNTS, FNQA…FLIT, IVLA…ICVA, LLLY…LYIE, LIIF…LTNF, TLQV…VLIF, and PVTV…VLYS. The EamA domain occupies 89 to 196; it reads PIFLTMTHML…PVVSGIVLAS (108 aa).

It belongs to the TPT transporter family. TPT (TC 2.A.7.9) subfamily.

It localises to the membrane. The protein is Probable sugar phosphate/phosphate translocator At1g12500 of Arabidopsis thaliana (Mouse-ear cress).